Here is a 573-residue protein sequence, read N- to C-terminus: Solute carrier family 41 member 2 (573 aa).

At 1–162 (MTNCKGRSTI…KESSSIMALQ (162 aa)) the chain is on the extracellular side. Residues 163–183 (ILVPFLLAGFGTVTAGMVLDI) form a helical membrane-spanning segment. The Cytoplasmic portion of the chain corresponds to 184–195 (VQHWDVFKNVTE). The helical transmembrane segment at 196 to 216 (VFILVPALLGLKGNLEMTLAS) threads the bilayer. The Extracellular portion of the chain corresponds to 217-245 (RLSTAVNIGKMDSPIEKWNLIIGNLALKQ). A helical transmembrane segment spans residues 246-266 (VQATVVGFLAAVAAVILGWIP). The Cytoplasmic segment spans residues 267–282 (EGKYSFSHSILLCSSS). Residues 283–303 (VATAFIASLLQGIIMVGVIVG) form a helical membrane-spanning segment. Topologically, residues 304-313 (SKKTGINPDN) are extracellular. A helical transmembrane segment spans residues 314 to 334 (VATPIAASFGDLITLAILAWI). Over 335 to 347 (SQGLYTCLETYYY) the chain is Cytoplasmic. A helical membrane pass occupies residues 348–368 (VSPLVGAFFLALTPMGIVIAA). The Extracellular portion of the chain corresponds to 369 to 376 (KHPATRTV). A helical membrane pass occupies residues 377–397 (LHSGWEPVITAMIISSIGGLI). The Cytoplasmic portion of the chain corresponds to 398–406 (LDTTVSDPN). A helical membrane pass occupies residues 407-427 (LVGIVVYTPVINGIGGNLVAI). Residues 428-469 (QASRISTYLHLHSIPGELPEEAKGCYYPCRTYYGTGVNNKSA) are Extracellular-facing. The chain crosses the membrane as a helical span at residues 470 to 490 (QVLLLLVIPGHLIFLYTIHLM). Topologically, residues 491 to 499 (KSGHTSLTP) are cytoplasmic. A helical membrane pass occupies residues 500 to 520 (IFIAVYLFAALLQVFTLLWIA). Topologically, residues 521–543 (DWMVHHFWKKGKDPDSFSIPYLT) are extracellular. A helical membrane pass occupies residues 544-564 (ALGDLLGTALLAVGFHFLWLI). Residues 565 to 573 (GDRDGDVGD) lie on the Cytoplasmic side of the membrane.

The protein belongs to the SLC41A transporter family.

It localises to the cell membrane. The enzyme catalyses Mg(2+)(in) = Mg(2+)(out). It catalyses the reaction Mn(2+)(in) = Mn(2+)(out). It carries out the reaction Co(2+)(in) = Co(2+)(out). The catalysed reaction is Ni(2+)(in) = Ni(2+)(out). The enzyme catalyses Fe(2+)(in) = Fe(2+)(out). Functionally, acts as a plasma-membrane magnesium transporter. Can also mediate the transport of other divalent metal cations in an order of Ba(2+) &gt; Ni(2+) &gt; Co(2+) &gt; Fe(2+) &gt; Mn(2+). The chain is Solute carrier family 41 member 2 (SLC41A2) from Gallus gallus (Chicken).